The chain runs to 45 residues: Metallothionein-like protein 1C (45 aa).

This sequence belongs to the metallothionein superfamily. Type 15 family. Widely expressed at low levels.

Metallothioneins have a high content of cysteine residues that bind various heavy metals. Confers tolerance to cadmium (Cd) and plays a role in Cd and zinc (Zn) homeostasis. This is Metallothionein-like protein 1C (MT1C) from Arabidopsis thaliana (Mouse-ear cress).